The sequence spans 165 residues: GPI-anchored protein LORELEI (165 aa).

An N-terminal signal peptide occupies residues 1-20 (MELILLFFFLMALLVSLSSS). The segment at 82 to 93 (PYVSQINDMNSD) is required for its function in pollen tube reception. The N-linked (GlcNAc...) asparagine glycan is linked to asparagine 137. Residue serine 139 is the site of GPI-anchor amidated serine attachment. The propeptide at 140-165 (TADSTPRFISLLISAATAVFALLVLT) is removed in mature form.

In terms of assembly, interacts with FER. As to expression, expressed in leaves, buds, flowers and stems. Highest expression in the synergid cells of the female gametophyte.

It is found in the cell membrane. Female gametophyte-specific component of the signaling pathway required for fertilization. Required for reception of the pollen tube by the female gametophyte. Acts specifically at the synergid cell surface for pollen tube reception. Plays a role in double fertilization and early seed development. Component of the FER-regulated Rho GTPase signaling complex. Acts as a chaperone and coreceptor for FER. Required for localization of FER to the plasma membrane. The sequence is that of GPI-anchored protein LORELEI (LRE) from Arabidopsis thaliana (Mouse-ear cress).